The primary structure comprises 329 residues: 7,8-didemethyl-8-hydroxy-5-deazariboflavin synthase (329 aa).

The Radical SAM core domain occupies 6–244 (ITYTKNVFLP…EEISIQVAPN (239 aa)). 3 residues coordinate [4Fe-4S] cluster: Cys20, Cys24, and Cys27.

This sequence belongs to the radical SAM superfamily. CofG family. In terms of assembly, consists of two subunits, CofG and CofH. It depends on [4Fe-4S] cluster as a cofactor.

The enzyme catalyses 5-amino-5-(4-hydroxybenzyl)-6-(D-ribitylimino)-5,6-dihydrouracil + S-adenosyl-L-methionine = 7,8-didemethyl-8-hydroxy-5-deazariboflavin + 5'-deoxyadenosine + L-methionine + NH4(+) + H(+). It participates in cofactor biosynthesis; coenzyme F0 biosynthesis. Functionally, catalyzes the radical-mediated synthesis of 7,8-didemethyl-8-hydroxy-5-deazariboflavin from 5-amino-5-(4-hydroxybenzyl)-6-(D-ribitylimino)-5,6-dihydrouracil. The protein is 7,8-didemethyl-8-hydroxy-5-deazariboflavin synthase of Methanoregula boonei (strain DSM 21154 / JCM 14090 / 6A8).